The following is a 675-amino-acid chain: Methionine--tRNA ligase (675 aa).

The short motif at 15–25 (PYANGSIHLGH) is the 'HIGH' region element. Zn(2+) contacts are provided by Cys146, Cys149, Cys159, and Cys162. Residues 332–336 (KMSKS) carry the 'KMSKS' region motif. Lys335 is an ATP binding site. Positions 573–675 (DFAKVDMRIA…SGAQPGMQVK (103 aa)) constitute a tRNA-binding domain.

It belongs to the class-I aminoacyl-tRNA synthetase family. MetG type 1 subfamily. As to quaternary structure, homodimer. It depends on Zn(2+) as a cofactor.

The protein localises to the cytoplasm. The enzyme catalyses tRNA(Met) + L-methionine + ATP = L-methionyl-tRNA(Met) + AMP + diphosphate. Its function is as follows. Is required not only for elongation of protein synthesis but also for the initiation of all mRNA translation through initiator tRNA(fMet) aminoacylation. In Yersinia pseudotuberculosis serotype IB (strain PB1/+), this protein is Methionine--tRNA ligase.